Reading from the N-terminus, the 1430-residue chain is rRNA biogenesis protein RRP5 (1430 aa).

6 consecutive S1 motif domains span residues 74–160 (DMLV…LSLK), 176–238 (GFIF…CTCV), 261–329 (GSIV…LTLN), 447–511 (GDLV…VSNR), 531–592 (GNVY…LTLP), and 697–771 (QVGD…VSAK). The segment at 1041 to 1145 (KITNGQKKTQ…AKEKAKAEIK (105 aa)) is disordered. Positions 1043–1053 (TNGQKKTQPLT) are enriched in polar residues. 2 stretches are compositionally biased toward basic and acidic residues: residues 1057–1082 (VKEK…KSET) and 1135–1145 (SAKEKAKAEIK). The stretch at 1119 to 1157 (LNVAETQKNAAKKKRLSAKEKAKAEIKEEQRLREIEERN) forms a coiled coil. 6 HAT repeats span residues 1161-1193 (KARL…FLLS), 1195-1232 (TEIE…MELV), 1265-1297 (KRKD…AYFW), 1299-1333 (GKSD…LYAK), 1335-1367 (DNND…MLIK), and 1369-1404 (GLID…LEEN).

It localises to the nucleus. The protein resides in the nucleolus. Involved in rRNA processing or maturation during ribosome biogenesis. The chain is rRNA biogenesis protein RRP5 from Drosophila melanogaster (Fruit fly).